We begin with the raw amino-acid sequence, 560 residues long: Dimethylaniline monooxygenase [N-oxide-forming] 4 (560 aa).

Residues 9–13 (GAGVS), E32, and 40–41 (LW) contribute to the FAD site. Residues 60 to 61 (TN) and 195 to 198 (TGGD) each bind NADP(+). The chain crosses the membrane as a helical span at residues 519–539 (APVLIVSLLLIYKSSLFLELV).

This sequence belongs to the FMO family. It depends on FAD as a cofactor. Detected in liver and kidney (at protein level).

It localises to the microsome membrane. The protein resides in the endoplasmic reticulum membrane. The enzyme catalyses N,N-dimethylaniline + NADPH + O2 + H(+) = N,N-dimethylaniline N-oxide + NADP(+) + H2O. Functionally, this protein is involved in the oxidative metabolism of a variety of xenobiotics such as drugs and pesticides. The sequence is that of Dimethylaniline monooxygenase [N-oxide-forming] 4 (Fmo4) from Rattus norvegicus (Rat).